Reading from the N-terminus, the 136-residue chain is Histone H3-like 3 (136 aa).

Residues Met-1–Lys-15 are compositionally biased toward basic residues. The interval Met-1 to Tyr-42 is disordered. N6,N6,N6-trimethyllysine; alternate occurs at positions 5 and 10. Lys-5 and Lys-10 each carry N6,N6-dimethyllysine; alternate. An N6-methyllysine; alternate mark is found at Lys-5 and Lys-10. Lys-10 carries the post-translational modification N6-acetyllysine; alternate. At Ser-11 the chain carries Phosphoserine. Lys-15 is subject to N6-acetyllysine. N6-methyllysine; alternate is present on residues Lys-24 and Lys-28. Lys-24 is modified (N6-acetyllysine; alternate). Lys-28 carries the post-translational modification N6,N6,N6-trimethyllysine; alternate. Lys-28 carries the N6,N6-dimethyllysine; alternate modification. A Phosphoserine modification is found at Ser-29. Lys-37 carries the N6,N6,N6-trimethyllysine; alternate modification. An N6,N6-dimethyllysine; alternate modification is found at Lys-37. The residue at position 37 (Lys-37) is an N6-methyllysine; alternate.

This sequence belongs to the histone H3 family. In terms of assembly, the nucleosome is a histone octamer containing two molecules each of H2A, H2B, H3 and H4 assembled in one H3-H4 heterotetramer and two H2A-H2B heterodimers. The octamer wraps approximately 147 bp of DNA. Expressed in roots, seedlings, leaves and open flowers.

The protein resides in the nucleus. Its subcellular location is the chromosome. Functionally, core component of nucleosome. Nucleosomes wrap and compact DNA into chromatin, limiting DNA accessibility to the cellular machineries which require DNA as a template. Histones thereby play a central role in transcription regulation, DNA repair, DNA replication and chromosomal stability. DNA accessibility is regulated via a complex set of post-translational modifications of histones, also called histone code, and nucleosome remodeling. This Arabidopsis thaliana (Mouse-ear cress) protein is Histone H3-like 3.